We begin with the raw amino-acid sequence, 185 residues long: Ribosome-recycling factor (185 aa).

The protein belongs to the RRF family.

Its subcellular location is the cytoplasm. Functionally, responsible for the release of ribosomes from messenger RNA at the termination of protein biosynthesis. May increase the efficiency of translation by recycling ribosomes from one round of translation to another. This chain is Ribosome-recycling factor, found in Vibrio parahaemolyticus serotype O3:K6 (strain RIMD 2210633).